We begin with the raw amino-acid sequence, 153 residues long: Ribosome maturation factor RimP (153 aa).

It belongs to the RimP family.

Its subcellular location is the cytoplasm. Functionally, required for maturation of 30S ribosomal subunits. This chain is Ribosome maturation factor RimP, found in Solibacter usitatus (strain Ellin6076).